Here is an 804-residue protein sequence, read N- to C-terminus: Phenylalanine--tRNA ligase beta subunit (804 aa).

Positions Pro40–Ala153 constitute a tRNA-binding domain. Residues Pro400–Ala476 enclose the B5 domain. Positions 454, 460, 463, and 464 each coordinate Mg(2+). The region spanning Ser710–Arg802 is the FDX-ACB domain.

Belongs to the phenylalanyl-tRNA synthetase beta subunit family. Type 1 subfamily. As to quaternary structure, tetramer of two alpha and two beta subunits. Mg(2+) is required as a cofactor.

It localises to the cytoplasm. The enzyme catalyses tRNA(Phe) + L-phenylalanine + ATP = L-phenylalanyl-tRNA(Phe) + AMP + diphosphate + H(+). This chain is Phenylalanine--tRNA ligase beta subunit, found in Chlorobium luteolum (strain DSM 273 / BCRC 81028 / 2530) (Pelodictyon luteolum).